We begin with the raw amino-acid sequence, 585 residues long: Protein FAM83D (585 aa).

The DUF1669 stretch occupies residues 1 to 296 (MAARFELLDD…LYAQSEPISS (296 aa)). A Phosphoserine modification is found at S295. 2 disordered regions span residues 334-411 (LSST…TSSS) and 425-482 (AASS…SQGS). Residues 337 to 585 (TPRKSNLGPE…RDIALYPPYQ (249 aa)) are required for interaction with KIF22 and function in chromosome congression. Composition is skewed to basic and acidic residues over residues 347 to 360 (EPPKDRAKPKRPDS) and 369 to 383 (DYFHSHKDQLEDSKV). Residues 425 to 441 (AASSQATVWSKSTTTQT) show a composition bias toward polar residues. S458 is subject to Phosphoserine. Positions 458-482 (SPASKMSVSRSSSVRSSSSVSSQGS) are enriched in low complexity. T511 carries the phosphothreonine modification.

Belongs to the FAM83 family. Interacts with FBXW7; promotes FBXW7 degradation. May interact with RAF1. Interacts with KIF22; recruits KIF22 to mitotic spindle microtubules. Interacts (via C-terminus) with DYNLL1. Interacts with HMMR. Directly interacts (via DUF1669) with CSNK1A1 and CSNK1A1L. In terms of processing, phosphorylated during mitosis.

The protein localises to the cytoplasm. Its subcellular location is the cytoskeleton. It localises to the spindle. The protein resides in the spindle pole. Its function is as follows. Through the degradation of FBXW7, may act indirectly on the expression and downstream signaling of MTOR, JUN and MYC. May play also a role in cell proliferation through activation of the ERK1/ERK2 signaling cascade. May also be important for proper chromosome congression and alignment during mitosis through its interaction with KIF22. The polypeptide is Protein FAM83D (Mus musculus (Mouse)).